We begin with the raw amino-acid sequence, 2084 residues long: RNA-directed RNA polymerase L (2084 aa).

The endonuclease stretch occupies residues Glu20–Leu221. Mn(2+)-binding residues include His80, Asp112, and Glu126. The For endonuclease activity role is filled by Lys145. The RdRp catalytic domain maps to Ser969 to Thr1172. Asp1127 serves as a coordination point for Mg(2+). A cap-binding region spans residues Ala1695–Glu1810.

This sequence belongs to the Bunyavirales RNA polymerase family. Homomultimer. Interacts with the glycoprotein N; this interaction allows efficient polymerase packaging into virus particles. Interacts with nucleoprotein N. Mn(2+) serves as cofactor. It depends on Mg(2+) as a cofactor.

The protein localises to the host Golgi apparatus. It is found in the host endoplasmic reticulum. Its subcellular location is the host endoplasmic reticulum-Golgi intermediate compartment. It localises to the virion. The enzyme catalyses RNA(n) + a ribonucleoside 5'-triphosphate = RNA(n+1) + diphosphate. With respect to regulation, inhibited by Baloxavir acid (BXA). RNA-dependent RNA polymerase, which is responsible for the replication and transcription of the viral RNA genome using antigenomic RNA as an intermediate. During transcription, synthesizes subgenomic RNAs and assures their capping by a cap-snatching mechanism, which involves the endonuclease activity cleaving the host capped pre-mRNAs. These short capped RNAs are then used as primers for viral transcription. The 3'-end of subgenomic mRNAs molecules are not polyadenylated. During replication, the polymerase binds the 5' and 3' vRNA extremities at distinct sites. In turn, significant conformational changes occur in the polymerase and in vRNA to initiate active RNA synthesis. As a consequence of the use of the same enzyme for both transcription and replication, these mechanisms need to be well coordinated. This Dabie bandavirus (Severe fever with thrombocytopenia virus) protein is RNA-directed RNA polymerase L.